The chain runs to 160 residues: Lipoprotein signal peptidase (160 aa).

Helical transmembrane passes span 60–80 (TEWL…AFFL) and 84–104 (LPFL…AGTI). Active-site residues include aspartate 118 and aspartate 132. The helical transmembrane segment at 127–147 (TFNMADSCLTLGIIWLVLLYL) threads the bilayer.

Belongs to the peptidase A8 family.

It localises to the cell membrane. It catalyses the reaction Release of signal peptides from bacterial membrane prolipoproteins. Hydrolyzes -Xaa-Yaa-Zaa-|-(S,diacylglyceryl)Cys-, in which Xaa is hydrophobic (preferably Leu), and Yaa (Ala or Ser) and Zaa (Gly or Ala) have small, neutral side chains.. Its pathway is protein modification; lipoprotein biosynthesis (signal peptide cleavage). In terms of biological role, this protein specifically catalyzes the removal of signal peptides from prolipoproteins. The polypeptide is Lipoprotein signal peptidase (Dehalococcoides mccartyi (strain ATCC BAA-2266 / KCTC 15142 / 195) (Dehalococcoides ethenogenes (strain 195))).